We begin with the raw amino-acid sequence, 283 residues long: Acetylglutamate kinase (283 aa).

Substrate-binding positions include 64–65 (GG), Arg-86, and Asn-179.

It belongs to the acetylglutamate kinase family. ArgB subfamily.

The protein resides in the cytoplasm. It carries out the reaction N-acetyl-L-glutamate + ATP = N-acetyl-L-glutamyl 5-phosphate + ADP. It participates in amino-acid biosynthesis; L-arginine biosynthesis; N(2)-acetyl-L-ornithine from L-glutamate: step 2/4. Its function is as follows. Catalyzes the ATP-dependent phosphorylation of N-acetyl-L-glutamate. The protein is Acetylglutamate kinase of Campylobacter hominis (strain ATCC BAA-381 / DSM 21671 / CCUG 45161 / LMG 19568 / NCTC 13146 / CH001A).